We begin with the raw amino-acid sequence, 180 residues long: Centromere protein M (180 aa).

The protein resides in the nucleus. It is found in the chromosome. Its subcellular location is the centromere. In terms of biological role, probable component of a centromeric complex involved in assembly of kinetochore proteins, mitotic progression and chromosome segregation. The protein is Centromere protein M (cenpm) of Xenopus laevis (African clawed frog).